The primary structure comprises 264 residues: NAD kinase (264 aa).

The Proton acceptor role is filled by D45. Residues 45–46 (DG), H50, 121–122 (NE), R147, D149, A184, and Q224 each bind NAD(+).

It belongs to the NAD kinase family. It depends on a divalent metal cation as a cofactor.

The protein resides in the cytoplasm. The catalysed reaction is NAD(+) + ATP = ADP + NADP(+) + H(+). Its function is as follows. Involved in the regulation of the intracellular balance of NAD and NADP, and is a key enzyme in the biosynthesis of NADP. Catalyzes specifically the phosphorylation on 2'-hydroxyl of the adenosine moiety of NAD to yield NADP. This Lysinibacillus sphaericus (strain C3-41) protein is NAD kinase.